Here is a 429-residue protein sequence, read N- to C-terminus: Phosphoribosylamine--glycine ligase (429 aa).

Residues K109 to D316 enclose the ATP-grasp domain. An ATP-binding site is contributed by L135–S196. 2 residues coordinate Mg(2+): E286 and N288.

Belongs to the GARS family. As to quaternary structure, monomer. The cofactor is Mg(2+). Requires Mn(2+) as cofactor.

The enzyme catalyses 5-phospho-beta-D-ribosylamine + glycine + ATP = N(1)-(5-phospho-beta-D-ribosyl)glycinamide + ADP + phosphate + H(+). Its pathway is purine metabolism; IMP biosynthesis via de novo pathway; N(1)-(5-phospho-D-ribosyl)glycinamide from 5-phospho-alpha-D-ribose 1-diphosphate: step 2/2. This Salmonella typhimurium (strain LT2 / SGSC1412 / ATCC 700720) protein is Phosphoribosylamine--glycine ligase.